Reading from the N-terminus, the 250-residue chain is Large ribosomal subunit protein uL29m (250 aa).

The transit peptide at 1-24 (MRPGAASIRTTGSVLAFLVPSAQC) directs the protein to the mitochondrion. The tract at residues 66–86 (VLSKKGSGDQPPKPVPITEKV) is disordered.

Belongs to the universal ribosomal protein uL29 family. In terms of assembly, component of the mitochondrial large ribosomal subunit. Mature mitochondrial ribosomes consist of a small (37S) and a large (54S) subunit. The 37S subunit contains at least 33 different proteins and 1 molecule of RNA (15S). The 54S subunit contains at least 45 different proteins and 1 molecule of RNA (21S).

It localises to the mitochondrion. This is Large ribosomal subunit protein uL29m (MRPL4) from Phaeosphaeria nodorum (strain SN15 / ATCC MYA-4574 / FGSC 10173) (Glume blotch fungus).